The following is a 138-amino-acid chain: MDATQPQYELSVVTQCLKSAIDVIQWLIPTITKFSQSHPLVFQLLFIFFTFYVFYKLLMNFITLVKRFLYLTLVVTCIGIYMRGSQQFLTVDLLNFYNFVMSNRYYAFKIYTLFINALEREINTVYHLAQMKMEQLLK.

Topologically, residues 1–39 (MDATQPQYELSVVTQCLKSAIDVIQWLIPTITKFSQSHP) are cytoplasmic. The helical transmembrane segment at 40-58 (LVFQLLFIFFTFYVFYKLL) threads the bilayer. The Perinuclear space segment spans residues 59-67 (MNFITLVKR). Residues 68–84 (FLYLTLVVTCIGIYMRG) traverse the membrane as a helical segment. The Cytoplasmic portion of the chain corresponds to 85–138 (SQQFLTVDLLNFYNFVMSNRYYAFKIYTLFINALEREINTVYHLAQMKMEQLLK).

It belongs to the APQ12 family.

The protein resides in the nucleus membrane. The protein localises to the endoplasmic reticulum membrane. Functionally, involved in the regulation of lipid homeostasis in the endoplasmic reticulum, thereby impacting nuclear pore complex biogenesis and localization, and nucleocytoplasmic mRNA transport. The protein is Nuclear membrane organization protein APQ12 (APQ12) of Saccharomyces cerevisiae (strain ATCC 204508 / S288c) (Baker's yeast).